Reading from the N-terminus, the 592-residue chain is Bifunctional enzyme BirA/CoaX (592 aa).

Residues 1–329 (MTVLKLSHWR…ISLRSDDRPV (329 aa)) form a biotin--protein ligase region. The 177-residue stretch at 83-259 (QTALKHECAS…ELDAVLLQYA (177 aa)) folds into the BPL/LPL catalytic domain. The tract at residues 336–592 (DSERFLLLDG…AAEGREYEHI (257 aa)) is type III pantothenate kinase. 344-351 (DGGNSRLK) serves as a coordination point for ATP. Residues Y426 and 433–436 (GSDR) contribute to the substrate site. D435 (proton acceptor) is an active-site residue. T458 is a binding site for ATP. T508 contacts substrate.

The protein in the N-terminal section; belongs to the biotin--protein ligase family. This sequence in the C-terminal section; belongs to the type III pantothenate kinase family. NH4(+) is required as a cofactor. The cofactor is K(+).

It is found in the cytoplasm. The catalysed reaction is biotin + L-lysyl-[protein] + ATP = N(6)-biotinyl-L-lysyl-[protein] + AMP + diphosphate + H(+). It carries out the reaction (R)-pantothenate + ATP = (R)-4'-phosphopantothenate + ADP + H(+). The protein operates within cofactor biosynthesis; coenzyme A biosynthesis; CoA from (R)-pantothenate: step 1/5. Activates biotin to form biotinyl-5'-adenylate and transfers the biotin moiety to biotin-accepting proteins. Functionally, catalyzes the phosphorylation of pantothenate (Pan), the first step in CoA biosynthesis. The chain is Bifunctional enzyme BirA/CoaX (birA/coaX) from Neisseria meningitidis serogroup B (strain ATCC BAA-335 / MC58).